The sequence spans 462 residues: Glycoprotein endo-alpha-1,2-mannosidase (462 aa).

The Cytoplasmic portion of the chain corresponds to 1–8 (MAKFRRGT). The chain crosses the membrane as a helical; Signal-anchor for type II membrane protein span at residues 9–29 (CIILALFILFIFSLMMGLKML). Residues 30-462 (RPNTATFGAP…YALDHQLPVS (433 aa)) are Lumenal-facing. The tract at residues 60–462 (DFQKSDRINS…YALDHQLPVS (403 aa)) is catalytic.

The protein belongs to the glycosyl hydrolase 99 family. Post-translationally, undergoes proteolytic cleavage in the C-terminal region.

The protein resides in the golgi apparatus membrane. The catalysed reaction is N-{alpha-Glc-(1-&gt;3)-alpha-Man-(1-&gt;2)-alpha-Man-(1-&gt;2)-alpha-Man-(1-&gt;3)-[alpha-Man-(1-&gt;2)-alpha-Man-(1-&gt;3)-[alpha-Man-(1-&gt;2)-alpha-Man-(1-&gt;6)]-alpha-Man-(1-&gt;6)]-beta-Man-(1-&gt;4)-beta-GlcNAc-(1-&gt;4)-beta-GlcNAc}-L-asparaginyl-[protein] + H2O = alpha-D-glucosyl-(1-&gt;3)-D-mannopyranose + N(4)-{alpha-D-Man-(1-&gt;2)-alpha-D-Man-(1-&gt;3)-[alpha-D-Man-(1-&gt;2)-alpha-D-Man-(1-&gt;3)-[alpha-D-Man-(1-&gt;2)-alpha-D-Man-(1-&gt;6)]-alpha-D-Man-(1-&gt;6)]-beta-D-Man-(1-&gt;4)-beta-D-GlaNAc-(1-&gt;4)-beta-D-GlcNAc}-L-asparaginyl-[protein] (N-glucan mannose isomer 8A1,2,3B1,2). This Pongo abelii (Sumatran orangutan) protein is Glycoprotein endo-alpha-1,2-mannosidase (MANEA).